We begin with the raw amino-acid sequence, 299 residues long: Regucalcin (299 aa).

Residue Glu-18 participates in a divalent metal cation binding. Positions 101, 103, and 121 each coordinate substrate. An N6-succinyllysine modification is found at Lys-144. A divalent metal cation is bound by residues Asn-154 and Asp-204. Catalysis depends on Asp-204, which acts as the Proton donor/acceptor. Residues Lys-244 and Lys-253 each carry the N6-succinyllysine modification.

It belongs to the SMP-30/CGR1 family. Monomer. Zn(2+) is required as a cofactor. Mn(2+) serves as cofactor. The cofactor is Ca(2+). It depends on Mg(2+) as a cofactor. As to expression, mainly present in the liver. Weak expression was found in the brain, lung and kidney.

The protein resides in the cytoplasm. The catalysed reaction is D-glucono-1,5-lactone + H2O = D-gluconate + H(+). It participates in cofactor biosynthesis; L-ascorbate biosynthesis via UDP-alpha-D-glucuronate pathway; L-ascorbate from UDP-alpha-D-glucuronate: step 3/4. Gluconolactonase with low activity towards other sugar lactones, including gulonolactone and galactonolactone. Catalyzes a key step in ascorbic acid (vitamin C) biosynthesis. Can also hydrolyze diisopropyl phosphorofluoridate and phenylacetate (in vitro). Calcium-binding protein. Modulates Ca(2+) signaling, and Ca(2+)-dependent cellular processes and enzyme activities. The sequence is that of Regucalcin (Rgn) from Mus musculus (Mouse).